Reading from the N-terminus, the 238-residue chain is ATP-dependent dethiobiotin synthetase BioD (238 aa).

12–17 (EVGKTV) is an ATP binding site. Thr16 is a Mg(2+) binding site. Residue Lys37 is part of the active site. Substrate is bound at residue Thr41. ATP contacts are provided by residues Asp50, 109–112 (EGAG), 170–171 (GS), and 200–202 (PAG). Mg(2+) is bound by residues Asp50 and Glu109.

Belongs to the dethiobiotin synthetase family. As to quaternary structure, homodimer. The cofactor is Mg(2+).

It localises to the cytoplasm. The enzyme catalyses (7R,8S)-7,8-diammoniononanoate + CO2 + ATP = (4R,5S)-dethiobiotin + ADP + phosphate + 3 H(+). It participates in cofactor biosynthesis; biotin biosynthesis; biotin from 7,8-diaminononanoate: step 1/2. Catalyzes a mechanistically unusual reaction, the ATP-dependent insertion of CO2 between the N7 and N8 nitrogen atoms of 7,8-diaminopelargonic acid (DAPA, also called 7,8-diammoniononanoate) to form a ureido ring. The sequence is that of ATP-dependent dethiobiotin synthetase BioD from Parafrankia sp. (strain EAN1pec).